We begin with the raw amino-acid sequence, 149 residues long: MEVIAENRKARFEYFILEEFEAGMVLLSSEVKSLRERKVNISDAYVVEKNSEVWLHNMHIAEYKAANRKNHKPKRERKLLLHKKEINKLIGQIKTAGITVVPLSVYFNDKGFAKTKIAIVKGKKLYDKRATIKQREWDREKSRLSKNNL.

It belongs to the SmpB family.

Its subcellular location is the cytoplasm. Its function is as follows. Required for rescue of stalled ribosomes mediated by trans-translation. Binds to transfer-messenger RNA (tmRNA), required for stable association of tmRNA with ribosomes. tmRNA and SmpB together mimic tRNA shape, replacing the anticodon stem-loop with SmpB. tmRNA is encoded by the ssrA gene; the 2 termini fold to resemble tRNA(Ala) and it encodes a 'tag peptide', a short internal open reading frame. During trans-translation Ala-aminoacylated tmRNA acts like a tRNA, entering the A-site of stalled ribosomes, displacing the stalled mRNA. The ribosome then switches to translate the ORF on the tmRNA; the nascent peptide is terminated with the 'tag peptide' encoded by the tmRNA and targeted for degradation. The ribosome is freed to recommence translation, which seems to be the essential function of trans-translation. This is SsrA-binding protein from Wolbachia pipientis wMel.